A 217-amino-acid chain; its full sequence is Small ribosomal subunit protein uS3 (217 aa).

In terms of domain architecture, KH type-2 spans 40 to 110; the sequence is IRDLINKGFN…EVYINIHEVR (71 aa).

Belongs to the universal ribosomal protein uS3 family. In terms of assembly, part of the 30S ribosomal subunit. Forms a tight complex with proteins S10 and S14.

Functionally, binds the lower part of the 30S subunit head. Binds mRNA in the 70S ribosome, positioning it for translation. The polypeptide is Small ribosomal subunit protein uS3 (Rickettsia felis (strain ATCC VR-1525 / URRWXCal2) (Rickettsia azadi)).